A 394-amino-acid chain; its full sequence is Elongation factor Tu (394 aa).

The tr-type G domain occupies 10-204; the sequence is KPHINVGTIG…ALDNYIPEPK (195 aa). Residues 19-26 are G1; the sequence is GHVDHGKT. Residue 19–26 participates in GTP binding; that stretch reads GHVDHGKT. Mg(2+) is bound at residue threonine 26. Residues 60–64 form a G2 region; sequence GITIN. The tract at residues 81–84 is G3; that stretch reads DCPG. Residues 81 to 85 and 136 to 139 contribute to the GTP site; these read DCPGH and NKCD. A G4 region spans residues 136–139; the sequence is NKCD. The interval 174–176 is G5; sequence SAL.

This sequence belongs to the TRAFAC class translation factor GTPase superfamily. Classic translation factor GTPase family. EF-Tu/EF-1A subfamily. Monomer.

It localises to the cytoplasm. The enzyme catalyses GTP + H2O = GDP + phosphate + H(+). Functionally, GTP hydrolase that promotes the GTP-dependent binding of aminoacyl-tRNA to the A-site of ribosomes during protein biosynthesis. This is Elongation factor Tu from Blochmanniella pennsylvanica (strain BPEN).